The following is an 89-amino-acid chain: Small ribosomal subunit protein uS15 (89 aa).

This sequence belongs to the universal ribosomal protein uS15 family. Part of the 30S ribosomal subunit. Forms a bridge to the 50S subunit in the 70S ribosome, contacting the 23S rRNA.

One of the primary rRNA binding proteins, it binds directly to 16S rRNA where it helps nucleate assembly of the platform of the 30S subunit by binding and bridging several RNA helices of the 16S rRNA. Its function is as follows. Forms an intersubunit bridge (bridge B4) with the 23S rRNA of the 50S subunit in the ribosome. The sequence is that of Small ribosomal subunit protein uS15 from Saccharophagus degradans (strain 2-40 / ATCC 43961 / DSM 17024).